The primary structure comprises 164 residues: 3-hydroxyacyl-[acyl-carrier-protein] dehydratase FabZ (164 aa).

The active site involves His70.

The protein belongs to the thioester dehydratase family. FabZ subfamily.

The protein localises to the cytoplasm. It carries out the reaction a (3R)-hydroxyacyl-[ACP] = a (2E)-enoyl-[ACP] + H2O. Functionally, involved in unsaturated fatty acids biosynthesis. Catalyzes the dehydration of short chain beta-hydroxyacyl-ACPs and long chain saturated and unsaturated beta-hydroxyacyl-ACPs. This is 3-hydroxyacyl-[acyl-carrier-protein] dehydratase FabZ from Synechocystis sp. (strain ATCC 27184 / PCC 6803 / Kazusa).